Here is a 291-residue protein sequence, read N- to C-terminus: ATP synthase gamma chain (291 aa).

It belongs to the ATPase gamma chain family. In terms of assembly, F-type ATPases have 2 components, CF(1) - the catalytic core - and CF(0) - the membrane proton channel. CF(1) has five subunits: alpha(3), beta(3), gamma(1), delta(1), epsilon(1). CF(0) has three main subunits: a, b and c.

It localises to the cell inner membrane. Its function is as follows. Produces ATP from ADP in the presence of a proton gradient across the membrane. The gamma chain is believed to be important in regulating ATPase activity and the flow of protons through the CF(0) complex. The polypeptide is ATP synthase gamma chain (Ruegeria sp. (strain TM1040) (Silicibacter sp.)).